Reading from the N-terminus, the 114-residue chain is MNNQSAKAVVKIQRISPRKARLVADLFRGKDVKVALGILNNTNKKASQLFIKLLNSAIANATNNHGMDASKLFVKEVLVNEGPTLKRYQPRSQGRAYSIFKRTSNLSITLEERV.

It belongs to the universal ribosomal protein uL22 family. Part of the 50S ribosomal subunit.

Functionally, this protein binds specifically to 23S rRNA; its binding is stimulated by other ribosomal proteins, e.g. L4, L17, and L20. It is important during the early stages of 50S assembly. It makes multiple contacts with different domains of the 23S rRNA in the assembled 50S subunit and ribosome. In terms of biological role, the globular domain of the protein is located near the polypeptide exit tunnel on the outside of the subunit, while an extended beta-hairpin is found that lines the wall of the exit tunnel in the center of the 70S ribosome. The sequence is that of Large ribosomal subunit protein uL22 from Mycoplasmopsis agalactiae (strain NCTC 10123 / CIP 59.7 / PG2) (Mycoplasma agalactiae).